Reading from the N-terminus, the 162-residue chain is Gas vesicle protein I (162 aa).

The interval 1–162 is disordered; the sequence is MTGKQHQKHE…AERQRGGADE (162 aa). Basic and acidic residues-rich tracts occupy residues 22 to 37 and 47 to 64; these read INRD…QREK and RQSE…HDTQ. Composition is skewed to polar residues over residues 65 to 74 and 81 to 110; these read SETQRGTQSK and TGGT…SHST. Composition is skewed to basic and acidic residues over residues 122–142 and 151–162; these read ARER…EDKS and PKAERQRGGADE.

Belongs to the gas vesicle GvpI family. GvpF to GvpM interact with each other in vitro, and may form multi-subunit complex(es). Interacts with GvpC and GvpO.

Its subcellular location is the gas vesicle. Functionally, proteins GvpF to GvpM might be involved in nucleating gas vesicle formation. A minor component of the gas vesicle. Gas vesicles are hollow, gas filled proteinaceous nanostructures found in some microorganisms. They allow positioning of halobacteria at the optimal depth for growth in the poorly aerated, shallow brine pools of their habitat. In terms of biological role, expression of a 9.5 kb mc-vac DNA fragment containing 2 divergently transcribed regions (gvpD-gvpE-gvpF-gvpG-gvpH-gvpI-gvpJ-gvpK-gvpL-gvpM and gvpA-gvpC-gvpN-gvpO) allows H.volcanii to produce gas vesicles. The sequence is that of Gas vesicle protein I from Haloferax mediterranei (strain ATCC 33500 / DSM 1411 / JCM 8866 / NBRC 14739 / NCIMB 2177 / R-4) (Halobacterium mediterranei).